A 349-amino-acid polypeptide reads, in one-letter code: tRNA pseudouridine synthase D (349 aa).

F27 serves as a coordination point for substrate. D80 (nucleophile) is an active-site residue. Residue N129 participates in substrate binding. One can recognise a TRUD domain in the interval 155-303; the sequence is GVPNYFGAQR…VEAARRAMLL (149 aa). F329 lines the substrate pocket.

The protein belongs to the pseudouridine synthase TruD family.

It catalyses the reaction uridine(13) in tRNA = pseudouridine(13) in tRNA. In terms of biological role, responsible for synthesis of pseudouridine from uracil-13 in transfer RNAs. The polypeptide is tRNA pseudouridine synthase D (Escherichia coli (strain SE11)).